The chain runs to 103 residues: UPF0145 protein CYB_1351 (103 aa).

It belongs to the UPF0145 family.

This chain is UPF0145 protein CYB_1351, found in Synechococcus sp. (strain JA-2-3B'a(2-13)) (Cyanobacteria bacterium Yellowstone B-Prime).